The chain runs to 117 residues: Large ribosomal subunit protein bL19 (117 aa).

The protein belongs to the bacterial ribosomal protein bL19 family.

This protein is located at the 30S-50S ribosomal subunit interface and may play a role in the structure and function of the aminoacyl-tRNA binding site. The polypeptide is Large ribosomal subunit protein bL19 (Shewanella denitrificans (strain OS217 / ATCC BAA-1090 / DSM 15013)).